Reading from the N-terminus, the 673-residue chain is Polygalacturonate 4-alpha-galacturonosyltransferase (673 aa).

Residues 1 to 22 (MALKRGLSGVNRIRGSGGGSRS) lie on the Cytoplasmic side of the membrane. A helical; Signal-anchor for type II membrane protein transmembrane segment spans residues 23–43 (VLVLLIFFCVFAPLCFFVGRG). Residues 44 to 673 (VYIDSSNDYS…PYLRRCNLHE (630 aa)) are Lumenal-facing. N-linked (GlcNAc...) asparagine glycosylation is present at N103. The disordered stretch occupies residues 112–136 (GVDPSFRHSENPATPDVKSNNLNEK). Residues N382, N434, N538, and N585 are each glycosylated (N-linked (GlcNAc...) asparagine).

The protein belongs to the glycosyltransferase 8 family. Expressed in seedlings, inflorescences, flowers, siliques, pollen, roots, stems and leaves.

The protein resides in the golgi apparatus membrane. It carries out the reaction [(1-&gt;4)-alpha-D-galacturonosyl](n) + UDP-alpha-D-galacturonate = [(1-&gt;4)-alpha-D-galacturonosyl](n+1) + UDP + H(+). The protein operates within glycan metabolism; pectin biosynthesis. Involved in pectin biosynthesis. Catalyzes the transfer of galacturonic acid from uridine 5'-diphosphogalacturonic acid onto the pectic polysaccharide homogalacturonan. The sequence is that of Polygalacturonate 4-alpha-galacturonosyltransferase (GAUT1) from Arabidopsis thaliana (Mouse-ear cress).